The sequence spans 241 residues: MALLNRLASALESHRVRDRLIRTLGYCCQLIGGVLVEQCPNRSEVGRRLLVVSAQFNHCRTVLRLFDDLAMFVYTKQYGLGTKEEDIFIRWLSVLSNVTDQLYYPCEHIAWAADAKVLRVDSAWWWTLNTALWTLSLLLGAVKALWTMLKLRQKLRSPTGTSASQLPRSKRRAMEARICSEVLTLLSNLADLANAVHWLPRGVLWAGRFPPWLVGLMGTISSILSTCQAVRAGRQAEADSP.

The Cytoplasmic portion of the chain corresponds to 1–122 (MALLNRLASA…ADAKVLRVDS (122 aa)). A helical transmembrane segment spans residues 123 to 149 (AWWWTLNTALWTLSLLLGAVKALWTML). Residues 150–211 (KLRQKLRSPT…GVLWAGRFPP (62 aa)) are Lumenal-facing. Residues 212 to 227 (WLVGLMGTISSILSTC) traverse the membrane as a helical segment. Residues 228 to 241 (QAVRAGRQAEADSP) are Cytoplasmic-facing.

It belongs to the peroxin-11 family. As to quaternary structure, homodimer. Heterodimer with either PEX11A or PEX11B. Interacts with FIS1. As to expression, expressed in liver and at much lower levels in heart, kidney and testis.

Its subcellular location is the peroxisome membrane. In terms of biological role, promotes membrane protrusion and elongation on the peroxisomal surface. This chain is Peroxisomal membrane protein 11C (Pex11g), found in Mus musculus (Mouse).